The sequence spans 804 residues: Probable replication endonuclease from prophage-like region (804 aa).

Active-site O-(5'-phospho-DNA)-tyrosine intermediate residues include Y498 and Y502.

It belongs to the phage GPA family.

Its function is as follows. Possible endonuclease which induces a single-strand cut and initiates DNA replication. The chain is Probable replication endonuclease from prophage-like region from Shigella boydii serotype 4 (strain Sb227).